The chain runs to 707 residues: Choline transporter-like protein 4 (707 aa).

The Cytoplasmic segment spans residues 1-32 (MGEKQDPDKAYGKPAKYDPSFRGPIRNRSCTD). Residues 33–53 (IICCVLFFVFILGYIAVGLVA) traverse the membrane as a helical segment. At 54-226 (WVYGDPQQVL…KIFEDFAQSW (173 aa)) the chain is on the extracellular side. Residues N67, N142, N184, and N195 are each glycosylated (N-linked (GlcNAc...) asparagine). Residues 227–247 (YWILAALGVALVLSLLFVLLL) traverse the membrane as a helical segment. Over 248–249 (RL) the chain is Cytoplasmic. The helical transmembrane segment at 250-270 (VAGPLVFVLIIGVLGVLAYGI) threads the bilayer. The Extracellular portion of the chain corresponds to 271–306 (YHCWNEYRLLRDKGASISQLGFTTNLSAYSSVQETW). N-linked (GlcNAc...) asparagine glycosylation occurs at N295. A helical membrane pass occupies residues 307–327 (LAALILLAVLEGILLLMLIFL). Over 328–355 (RQRIRIAIALLEEASRAVGQMMSTLFYP) the chain is Cytoplasmic. Residues 356–376 (LVTFVLLLVCIAYWAMTALYL) form a helical membrane-spanning segment. Over 377–452 (ATSGQPQYVL…GVLGLFWTIN (76 aa)) the chain is Extracellular. N-linked (GlcNAc...) asparagine glycans are attached at residues N390, N402, and N413. A helical membrane pass occupies residues 453–473 (WVLALGQCVLAGAFASFYWAF). Topologically, residues 474–498 (HKPRDIPTFPLSSAFIRTLRYHTGS) are cytoplasmic. A helical transmembrane segment spans residues 499–519 (LAFGALILTLVQIARAILEYI). Residues 520 to 557 (DHKLRGAQNPVARCIMCCFKCCLWCLEKFIKFLNRNAY) lie on the Extracellular side of the membrane. Residues 558–578 (IMIAIYGKNFCVSAKNAFMLL) traverse the membrane as a helical segment. The Cytoplasmic segment spans residues 579 to 594 (MRNIVRVVVLDKVTDL). A helical membrane pass occupies residues 595–615 (LLFFGKLLVVGGVGVLSFFFF). At 616-635 (TGRIQGLGKDFESPQLNYYW) the chain is on the extracellular side. The chain crosses the membrane as a helical span at residues 636–656 (LPIMTSIMGAYVIASGFFSVF). Residues 657 to 707 (GMCVDTLFLCFLEDLERNDGSLDRPYYMSKALLKILGKKNEVPSGDKKRKK) lie on the Cytoplasmic side of the membrane.

This sequence belongs to the CTL (choline transporter-like) family. Post-translationally, N-glycosylated; N-glycosylation of Asn-677 and Asn-390 is required for a proper thiamine pyrophosphate uptake.

It localises to the membrane. It is found in the apical cell membrane. The catalysed reaction is choline(out) + n H(+)(in) = choline(in) + n H(+)(out). It catalyses the reaction thiamine diphosphate(out) = thiamine diphosphate(in). In terms of biological role, choline transporter that plays a role in the choline-acetylcholine system and is required to the efferent innervation of hair cells in the olivocochlear bundle for the maintenance of physiological function of outer hair cells and the protection of hair cells from acoustic injury. Also described as a thiamine pyrophosphate transporter in colon, may mediate the absorption of microbiota-generated thiamine pyrophosphate and contribute to host thiamine (vitamin B1) homeostasis. This Sus scrofa (Pig) protein is Choline transporter-like protein 4.